Consider the following 248-residue polypeptide: Kallikrein-12 (248 aa).

An N-terminal signal peptide occupies residues 1–17 (MGLSIFLLLCVLGLSQA). The Peptidase S1 domain occupies 22-246 (IFNGTECGRN…YVDWIRMIMR (225 aa)). N-linked (GlcNAc...) asparagine glycosylation occurs at N24. 6 disulfides stabilise this stretch: C28/C161, C47/C63, C133/C235, C140/C206, C172/C186, and C196/C222. Residues H62 and D108 each act as charge relay system in the active site. N-linked (GlcNAc...) asparagine glycosylation occurs at N163. Residue S200 is the Charge relay system of the active site.

It belongs to the peptidase S1 family. Kallikrein subfamily.

The protein resides in the secreted. The protein is Kallikrein-12 (KLK12) of Homo sapiens (Human).